Here is a 353-residue protein sequence, read N- to C-terminus: Photosystem II protein D1 (353 aa).

T2 is subject to N-acetylthreonine. Phosphothreonine is present on T2. 3 helical membrane passes run 29 to 46, 118 to 133, and 142 to 156; these read NIGWFGVLMIPTLLTATS, HFLLGVACYMGREWEL, and WIAVAYSAPVAAATA. H118 contacts chlorophyll a. Y126 contacts pheophytin a. [CaMn4O5] cluster-binding residues include D170 and E189. A helical membrane pass occupies residues 197 to 218; sequence FHMLGVAGVFGGSLFSAMHGSL. H198 contributes to the chlorophyll a binding site. A quinone-binding positions include H215 and 264-265; that span reads SF. H215 serves as a coordination point for Fe cation. H272 contributes to the Fe cation binding site. Residues 274-288 form a helical membrane-spanning segment; it reads FLAAWPVVGIWFTAL. The [CaMn4O5] cluster site is built by H332, E333, D342, and A344. Positions 345–353 are excised as a propeptide; it reads AVEAPAVNG.

The protein belongs to the reaction center PufL/M/PsbA/D family. In terms of assembly, PSII is composed of 1 copy each of membrane proteins PsbA, PsbB, PsbC, PsbD, PsbE, PsbF, PsbH, PsbI, PsbJ, PsbK, PsbL, PsbM, PsbT, PsbX, PsbY, PsbZ, Psb30/Ycf12, at least 3 peripheral proteins of the oxygen-evolving complex and a large number of cofactors. It forms dimeric complexes. The D1/D2 heterodimer binds P680, chlorophylls that are the primary electron donor of PSII, and subsequent electron acceptors. It shares a non-heme iron and each subunit binds pheophytin, quinone, additional chlorophylls, carotenoids and lipids. D1 provides most of the ligands for the Mn4-Ca-O5 cluster of the oxygen-evolving complex (OEC). There is also a Cl(-1) ion associated with D1 and D2, which is required for oxygen evolution. The PSII complex binds additional chlorophylls, carotenoids and specific lipids. serves as cofactor. Tyr-161 forms a radical intermediate that is referred to as redox-active TyrZ, YZ or Y-Z. In terms of processing, C-terminally processed by CTPA; processing is essential to allow assembly of the oxygen-evolving complex and thus photosynthetic growth.

It is found in the plastid. It localises to the chloroplast thylakoid membrane. It carries out the reaction 2 a plastoquinone + 4 hnu + 2 H2O = 2 a plastoquinol + O2. In terms of biological role, photosystem II (PSII) is a light-driven water:plastoquinone oxidoreductase that uses light energy to abstract electrons from H(2)O, generating O(2) and a proton gradient subsequently used for ATP formation. It consists of a core antenna complex that captures photons, and an electron transfer chain that converts photonic excitation into a charge separation. The D1/D2 (PsbA/PsbD) reaction center heterodimer binds P680, the primary electron donor of PSII as well as several subsequent electron acceptors. The chain is Photosystem II protein D1 from Dumortiera hirsuta (Liverwort).